The following is a 240-amino-acid chain: UDP-2,3-diacylglucosamine hydrolase (240 aa).

Mn(2+) contacts are provided by aspartate 8, histidine 10, aspartate 41, asparagine 79, and histidine 114. 79-80 (NR) serves as a coordination point for substrate. Aspartate 122, serine 160, asparagine 164, lysine 167, and histidine 195 together coordinate substrate. Mn(2+)-binding residues include histidine 195 and histidine 197.

The protein belongs to the LpxH family. It depends on Mn(2+) as a cofactor.

The protein localises to the cell inner membrane. It carries out the reaction UDP-2-N,3-O-bis[(3R)-3-hydroxytetradecanoyl]-alpha-D-glucosamine + H2O = 2-N,3-O-bis[(3R)-3-hydroxytetradecanoyl]-alpha-D-glucosaminyl 1-phosphate + UMP + 2 H(+). Its pathway is glycolipid biosynthesis; lipid IV(A) biosynthesis; lipid IV(A) from (3R)-3-hydroxytetradecanoyl-[acyl-carrier-protein] and UDP-N-acetyl-alpha-D-glucosamine: step 4/6. Functionally, hydrolyzes the pyrophosphate bond of UDP-2,3-diacylglucosamine to yield 2,3-diacylglucosamine 1-phosphate (lipid X) and UMP by catalyzing the attack of water at the alpha-P atom. Involved in the biosynthesis of lipid A, a phosphorylated glycolipid that anchors the lipopolysaccharide to the outer membrane of the cell. The sequence is that of UDP-2,3-diacylglucosamine hydrolase from Shigella dysenteriae serotype 1 (strain Sd197).